Reading from the N-terminus, the 5147-residue chain is Cadherin-related tumor suppressor (5147 aa).

A signal peptide spans 1-35 (MERLLLLFFLLLAGRESLCQTGDTKLELLAPRGRS). Cadherin domains follow at residues 36-156 (YATT…SPEF), 157-270 (PEPS…PPIF), 271-382 (DHSD…DPII), 383-494 (SFRF…EPVF), 495-599 (EKSE…APQF), 600-708 (SQRE…DPQF), 709-820 (YPRH…LEML), 821-942 (ECGQ…APVF), 943-1049 (ALDR…TPVF), 1050-1153 (DHTS…APQF), 1154-1278 (TNST…APEF), 1279-1384 (LRAP…APEF), 1385-1489 (TQSS…PPIF), 1490-1601 (PSTA…APVF), 1602-1713 (VSMN…VPQF), 1714-1823 (EQRS…PPQF), 1824-1922 (LDTP…PPLF), 1923-2027 (EDTV…APIF), 2028-2167 (DPMS…VPVF), 2168-2278 (ISAN…SPVF), 2279-2385 (DPKQ…PTFL), 2386-2491 (DSPY…DPVF), 2492-2596 (ELQS…IPKF), 2597-2703 (DSTT…FPTF), 2704-2810 (AYMA…APVM), 2811-2913 (EQLI…PPKF), 2914-3013 (TRLF…APEF), 3014-3124 (EHSF…PPKF), 3125-3229 (EQAE…TPRF), 3230-3334 (SVNS…PPVF), 3335-3439 (NHKE…YPQF), 3440-3545 (LQPV…PPEF), 3546-3651 (IKHY…GPTF), and 3652-3756 (TPEG…NPST). Residues 36–4583 (YATTYEQYAA…GQDAAQVADP (4548 aa)) are Extracellular-facing. N-linked (GlcNAc...) asparagine glycosylation is found at Asn-239, Asn-257, Asn-276, Asn-280, Asn-402, and Asn-461. Asn-605 and Asn-631 each carry an N-linked (GlcNAc...) asparagine glycan. 3 N-linked (GlcNAc...) asparagine glycosylation sites follow: Asn-1155, Asn-1367, and Asn-1458. N-linked (GlcNAc...) asparagine glycosylation is found at Asn-1751, Asn-1831, and Asn-1880. N-linked (GlcNAc...) asparagine glycans are attached at residues Asn-2080, Asn-2171, Asn-2247, Asn-2290, Asn-2437, and Asn-2581. N-linked (GlcNAc...) asparagine glycosylation occurs at Asn-2799. N-linked (GlcNAc...) asparagine glycosylation is found at Asn-2920, Asn-2946, and Asn-2967. Residues Asn-3167, Asn-3303, Asn-3386, Asn-3389, and Asn-3525 are each glycosylated (N-linked (GlcNAc...) asparagine). N-linked (GlcNAc...) asparagine glycans are attached at residues Asn-3852, Asn-3865, and Asn-3905. EGF-like domains follow at residues 3950–4011 (GYEP…EQCS), 4013–4049 (RQDP…KHCE), 4052–4090 (RSDV…NQCE), and 4092–4128 (VSDS…RHCE). 16 disulfide bridges follow: Cys-3954–Cys-3966, Cys-3960–Cys-3999, Cys-4001–Cys-4010, Cys-4017–Cys-4028, Cys-4022–Cys-4037, Cys-4039–Cys-4048, Cys-4056–Cys-4067, Cys-4061–Cys-4078, Cys-4080–Cys-4089, Cys-4096–Cys-4107, Cys-4101–Cys-4116, Cys-4118–Cys-4127, Cys-4294–Cys-4320, Cys-4325–Cys-4341, Cys-4334–Cys-4350, and Cys-4352–Cys-4361. The Laminin G-like 1 domain maps to 4129–4320 (RFSYGFQPLS…LQQKGILAGC (192 aa)). N-linked (GlcNAc...) asparagine glycosylation is present at Asn-4306. Residues 4321-4362 (NRQACQPALAAERCGGFAGQCIDRWSSSLCQCGGHLQSPDCS) form the EGF-like 5 domain. In terms of domain architecture, Laminin G-like 2 spans 4402–4569 (DNQQMRERRA…RYHGKIESGC (168 aa)). 5 N-linked (GlcNAc...) asparagine glycosylation sites follow: Asn-4414, Asn-4471, Asn-4487, Asn-4539, and Asn-4550. A disulfide bridge connects residues Cys-4536 and Cys-4569. A helical membrane pass occupies residues 4584–4609 (LSIGFTLVIVFFVILVVAILGSYVIY). Residues 4610 to 5147 (RFRGKQEKIG…NGPAAPEEYV (538 aa)) are Cytoplasmic-facing. Positions 4744 to 4771 (PEHYDLENASSIAPSDIDIVYHYKGYRE) are essential for stability of mitochondrial electron chain complexes I and V, and promotes interaction with ND-24. 3 disordered regions span residues 4787-4850 (AYTH…SQQP), 4871-4921 (TSSS…QTSM), and 4967-5041 (GDVD…PIPP). Over residues 4826–4835 (SASRTHQSTP) the composition is skewed to polar residues. Composition is skewed to low complexity over residues 4838–4850 (RLSP…SQQP) and 4891–4918 (SPVM…QAQQ). Ser-4843 is modified (phosphoserine). Polar residues predominate over residues 4972–5008 (HSSTSTDESGNDSFTCSEIEYDNNSLSGDGKYSTSKS). Phosphoserine occurs at positions 5054 and 5061. The tract at residues 5113–5147 (PDTNGPSQQQQQQTQVVSTLRMPSSNGPAAPEEYV) is disordered. A compositionally biased stretch (low complexity) spans 5119–5131 (SQQQQQQTQVVST).

Interacts with Fbxl7. Ft-mito interacts with NADH dehydrogenase subunit ND-24 and with ATP synthase subunit ATPsynC. Post-translationally, phosphorylated by fj on Ser/Thr of cadherin domains. Phosphorylation by fj enhances binding to ds. Phosphorylated in the cytoplasmic domain in a dco-dependent manner which is promoted by ds. In terms of processing, proteolytically cleaved to yield stably associated N- and C-terminal fragments. The C-terminal fragment is processed further to release a 68 kDa mitochondrial fragment, Ft-mito.

Its subcellular location is the cell membrane. It localises to the apical cell membrane. The protein localises to the mitochondrion. Its function is as follows. Involved in regulation of planar cell polarity in the compound eye where it is required for correct specification of the R3 and R4 photoreceptor cells by regulating Fz activity in the R3/R4 precursor cells. This is likely to occur through creation of an ft gradient so that the equatorial R3/R4 precursor cell has a higher level of ft function than its polar neighbor. Also required for planar cell polarity of wing hairs. Mediates heterophilic cell adhesion in vitro and is required to stabilize ds on the cell surface. Involved in regulation of eye imaginal disk size. Upstream component of the Hippo pathway where it is likely to act as a cell surface receptor involved in regulation of tissue size and is required for the localization and stability of ex. Probably acts as a cell surface receptor for ds. In terms of biological role, regulates mitochondrial electron transport chain integrity and promotes oxidative phosphorylation. This Drosophila melanogaster (Fruit fly) protein is Cadherin-related tumor suppressor.